The chain runs to 248 residues: MTSHPRDAPQFYLTAPSPCPYLPGQHERKVFTHLVGRRARDLNEILTQGGFRRSQTIAYRPACETCRACVSVRVVVGDFEPSASQRRVLKRNRDLVGQPQPNRPASEQYALFRRYLDARHGDGGMVDMTVLDYAMMVEDSHVETHLVVYRKRGPDTAINGRGVGAPIAVCLTDVLSDGLSMVYSFYEPSEADRSLGTFMILDHIERARLLGLPYLYLGYWVEGSRKMDYKAKFGPQERLMPQGWARVG.

This sequence belongs to the R-transferase family. Bpt subfamily.

The protein resides in the cytoplasm. It carries out the reaction N-terminal L-glutamyl-[protein] + L-leucyl-tRNA(Leu) = N-terminal L-leucyl-L-glutamyl-[protein] + tRNA(Leu) + H(+). The catalysed reaction is N-terminal L-aspartyl-[protein] + L-leucyl-tRNA(Leu) = N-terminal L-leucyl-L-aspartyl-[protein] + tRNA(Leu) + H(+). Functionally, functions in the N-end rule pathway of protein degradation where it conjugates Leu from its aminoacyl-tRNA to the N-termini of proteins containing an N-terminal aspartate or glutamate. The chain is Aspartate/glutamate leucyltransferase from Methylobacterium sp. (strain 4-46).